Reading from the N-terminus, the 152-residue chain is SsrA-binding protein (152 aa).

It belongs to the SmpB family.

The protein resides in the cytoplasm. Its function is as follows. Required for rescue of stalled ribosomes mediated by trans-translation. Binds to transfer-messenger RNA (tmRNA), required for stable association of tmRNA with ribosomes. tmRNA and SmpB together mimic tRNA shape, replacing the anticodon stem-loop with SmpB. tmRNA is encoded by the ssrA gene; the 2 termini fold to resemble tRNA(Ala) and it encodes a 'tag peptide', a short internal open reading frame. During trans-translation Ala-aminoacylated tmRNA acts like a tRNA, entering the A-site of stalled ribosomes, displacing the stalled mRNA. The ribosome then switches to translate the ORF on the tmRNA; the nascent peptide is terminated with the 'tag peptide' encoded by the tmRNA and targeted for degradation. The ribosome is freed to recommence translation, which seems to be the essential function of trans-translation. The sequence is that of SsrA-binding protein from Rickettsia prowazekii (strain Madrid E).